The following is a 395-amino-acid chain: Phosphoglycerate kinase (395 aa).

Substrate-binding positions include 20–22, Arg35, 58–61, Arg117, and Arg150; these read DLN and HFGR. ATP-binding positions include Lys200, Glu322, and 352–355; that span reads GGDT.

It belongs to the phosphoglycerate kinase family. As to quaternary structure, monomer.

Its subcellular location is the cytoplasm. It carries out the reaction (2R)-3-phosphoglycerate + ATP = (2R)-3-phospho-glyceroyl phosphate + ADP. Its pathway is carbohydrate degradation; glycolysis; pyruvate from D-glyceraldehyde 3-phosphate: step 2/5. This is Phosphoglycerate kinase from Brucella suis biovar 1 (strain 1330).